The chain runs to 101 residues: Putative pterin-4-alpha-carbinolamine dehydratase (101 aa).

The protein belongs to the pterin-4-alpha-carbinolamine dehydratase family.

It carries out the reaction (4aS,6R)-4a-hydroxy-L-erythro-5,6,7,8-tetrahydrobiopterin = (6R)-L-erythro-6,7-dihydrobiopterin + H2O. This chain is Putative pterin-4-alpha-carbinolamine dehydratase, found in Rhodopseudomonas palustris (strain BisB18).